The primary structure comprises 131 residues: Heat shock protein 15 homolog (131 aa).

The region spanning 6–67 (VRLDKWLWAA…NEEKEIKIIA (62 aa)) is the S4 RNA-binding domain. Residues 98–131 (ARKNNSLSMPHPDRRPNKKERRDLLKFKHQDKFE) form a disordered region. Basic and acidic residues predominate over residues 108-131 (HPDRRPNKKERRDLLKFKHQDKFE).

This sequence belongs to the HSP15 family.

In terms of biological role, involved in the recycling of free 50S ribosomal subunits that still carry a nascent chain. Binds RNA more specifically than DNA. Binds with very high affinity to the free 50S ribosomal subunit. Does not bind it when it is part of the 70S ribosome. This is Heat shock protein 15 homolog (hslR) from Haemophilus influenzae (strain ATCC 51907 / DSM 11121 / KW20 / Rd).